The chain runs to 196 residues: Molybdenum cofactor guanylyltransferase (196 aa).

Residues 10–12, lysine 23, asparagine 51, aspartate 69, and aspartate 99 each bind GTP; that span reads LAG. A Mg(2+)-binding site is contributed by aspartate 99.

This sequence belongs to the MobA family. Monomer. It depends on Mg(2+) as a cofactor.

The protein resides in the cytoplasm. The catalysed reaction is Mo-molybdopterin + GTP + H(+) = Mo-molybdopterin guanine dinucleotide + diphosphate. Functionally, transfers a GMP moiety from GTP to Mo-molybdopterin (Mo-MPT) cofactor (Moco or molybdenum cofactor) to form Mo-molybdopterin guanine dinucleotide (Mo-MGD) cofactor. The protein is Molybdenum cofactor guanylyltransferase of Shewanella sediminis (strain HAW-EB3).